We begin with the raw amino-acid sequence, 62 residues long: Defensin BmKDfsin4 (62 aa).

Positions M1–A24 are cleaved as a signal peptide. Intrachain disulfides connect C28-C49, C35-C57, and C39-C59.

This sequence belongs to the invertebrate defensin family. Type 2 subfamily.

It is found in the secreted. Its function is as follows. Dual-function peptide with antimicrobial and potassium channel-blocking activities. Shows inhibitory activity against Gram-positive bacteria such as S.aureus, B.subtilis, and M.luteus as well as methicillin-resistant S.aureus (MIC=0.1-20 uM). Does not act on bacteria by disrupting membranes. Also moderately inhibits Kv1.1/KCNA1 (25.2% inhibition at 1 uM), Kv1.2/KCNA2 (30.5% inhibition at 1 uM), and Kv1.3/KCNA3 potassium channels (IC(50)=510.2 nM, 61% inhibition at 1 uM). Inhibits potassium channels by interacting with the pore region. Does not show hemolytic activity. In vitro, dose-dependently decreases the production of Hepatitis B virus (HBV) DNA and HBV viral proteins in both culture medium and cell lysate. The sequence is that of Defensin BmKDfsin4 from Olivierus martensii (Manchurian scorpion).